Consider the following 701-residue polypeptide: Centrosomal protein of 83 kDa (701 aa).

Over residues 1-14 (MVVSTFTDMDTFPN) the composition is skewed to polar residues. Positions 1–23 (MVVSTFTDMDTFPNNFPPGGDSG) are disordered. 2 coiled-coil regions span residues 40-634 (LRCE…SLIL) and 665-698 (HMQEEQHQRELSLLRKRLEELETTQRKQLEELGS). Phosphoserine is present on Ser-698.

It belongs to the CEP83 family. Interacts with CEP164 and IFT20.

It is found in the cytoplasm. Its subcellular location is the cytoskeleton. The protein resides in the microtubule organizing center. It localises to the centrosome. The protein localises to the centriole. Component of the distal appendage region of the centriole involved in the initiation of primary cilium assembly. May collaborate with IFT20 in the trafficking of ciliary membrane proteins from the Golgi complex to the cilium during the initiation of primary cilium assembly. The protein is Centrosomal protein of 83 kDa (CEP83) of Homo sapiens (Human).